The chain runs to 428 residues: Glutamate-1-semialdehyde 2,1-aminomutase 1 (428 aa).

Residue Lys267 is modified to N6-(pyridoxal phosphate)lysine.

The protein belongs to the class-III pyridoxal-phosphate-dependent aminotransferase family. HemL subfamily. In terms of assembly, homodimer. It depends on pyridoxal 5'-phosphate as a cofactor.

It localises to the cytoplasm. It carries out the reaction (S)-4-amino-5-oxopentanoate = 5-aminolevulinate. It participates in porphyrin-containing compound metabolism; protoporphyrin-IX biosynthesis; 5-aminolevulinate from L-glutamyl-tRNA(Glu): step 2/2. The sequence is that of Glutamate-1-semialdehyde 2,1-aminomutase 1 from Staphylococcus aureus (strain Mu3 / ATCC 700698).